A 262-amino-acid polypeptide reads, in one-letter code: Acyl-[acyl-carrier-protein]--UDP-N-acetylglucosamine O-acyltransferase (262 aa).

Belongs to the transferase hexapeptide repeat family. LpxA subfamily. As to quaternary structure, homotrimer.

The protein resides in the cytoplasm. The enzyme catalyses a (3R)-hydroxyacyl-[ACP] + UDP-N-acetyl-alpha-D-glucosamine = a UDP-3-O-[(3R)-3-hydroxyacyl]-N-acetyl-alpha-D-glucosamine + holo-[ACP]. Its pathway is glycolipid biosynthesis; lipid IV(A) biosynthesis; lipid IV(A) from (3R)-3-hydroxytetradecanoyl-[acyl-carrier-protein] and UDP-N-acetyl-alpha-D-glucosamine: step 1/6. In terms of biological role, involved in the biosynthesis of lipid A, a phosphorylated glycolipid that anchors the lipopolysaccharide to the outer membrane of the cell. This Salmonella typhi protein is Acyl-[acyl-carrier-protein]--UDP-N-acetylglucosamine O-acyltransferase.